Consider the following 223-residue polypeptide: Imidazoleglycerol-phosphate dehydratase (223 aa).

The protein belongs to the imidazoleglycerol-phosphate dehydratase family.

The catalysed reaction is D-erythro-1-(imidazol-4-yl)glycerol 3-phosphate = 3-(imidazol-4-yl)-2-oxopropyl phosphate + H2O. The protein operates within amino-acid biosynthesis; L-histidine biosynthesis; L-histidine from 5-phospho-alpha-D-ribose 1-diphosphate: step 6/9. The chain is Imidazoleglycerol-phosphate dehydratase (HIS3) from Torulaspora delbrueckii (Yeast).